The primary structure comprises 386 residues: NADH-ubiquinone oxidoreductase 49 kDa subunit homolog (386 aa).

It belongs to the complex I 49 kDa subunit family.

The protein localises to the mitochondrion. The catalysed reaction is a ubiquinone + NADH + 5 H(+)(in) = a ubiquinol + NAD(+) + 4 H(+)(out). Functionally, core subunit of the mitochondrial membrane respiratory chain NADH dehydrogenase (Complex I) that is believed to belong to the minimal assembly required for catalysis. Complex I functions in the transfer of electrons from NADH to the respiratory chain. The immediate electron acceptor for the enzyme is believed to be ubiquinone. Component of the iron-sulfur (IP) fragment of the enzyme. Component of the iron-sulfur (IP) fragment of the enzyme. This Trypanosoma brucei brucei protein is NADH-ubiquinone oxidoreductase 49 kDa subunit homolog (NAD7).